We begin with the raw amino-acid sequence, 102 residues long: Large ribosomal subunit protein bL21 (102 aa).

It belongs to the bacterial ribosomal protein bL21 family. In terms of assembly, part of the 50S ribosomal subunit. Contacts protein L20.

This protein binds to 23S rRNA in the presence of protein L20. The protein is Large ribosomal subunit protein bL21 of Pelobacter propionicus (strain DSM 2379 / NBRC 103807 / OttBd1).